A 237-amino-acid polypeptide reads, in one-letter code: Uridylate kinase (237 aa).

Residue K11–G14 coordinates ATP. G53 contacts UMP. G54 and R58 together coordinate ATP. UMP is bound by residues D73 and T134 to T141. ATP is bound by residues T161, Y167, and D170.

Belongs to the UMP kinase family. In terms of assembly, homohexamer.

It localises to the cytoplasm. It catalyses the reaction UMP + ATP = UDP + ADP. It participates in pyrimidine metabolism; CTP biosynthesis via de novo pathway; UDP from UMP (UMPK route): step 1/1. With respect to regulation, inhibited by UTP. Catalyzes the reversible phosphorylation of UMP to UDP. This chain is Uridylate kinase, found in Burkholderia vietnamiensis (strain G4 / LMG 22486) (Burkholderia cepacia (strain R1808)).